Reading from the N-terminus, the 37-residue chain is Large ribosomal subunit protein bL36 (37 aa).

It belongs to the bacterial ribosomal protein bL36 family.

The protein is Large ribosomal subunit protein bL36 of Mycoplasma pneumoniae (strain ATCC 29342 / M129 / Subtype 1) (Mycoplasmoides pneumoniae).